Reading from the N-terminus, the 156-residue chain is Small ribosomal subunit protein uS7 (156 aa).

The protein belongs to the universal ribosomal protein uS7 family. As to quaternary structure, part of the 30S ribosomal subunit. Contacts proteins S9 and S11.

Functionally, one of the primary rRNA binding proteins, it binds directly to 16S rRNA where it nucleates assembly of the head domain of the 30S subunit. Is located at the subunit interface close to the decoding center, probably blocks exit of the E-site tRNA. This chain is Small ribosomal subunit protein uS7, found in Nitrosococcus oceani (strain ATCC 19707 / BCRC 17464 / JCM 30415 / NCIMB 11848 / C-107).